Consider the following 267-residue polypeptide: ATP synthase subunit a (267 aa).

5 helical membrane passes run 38–58, 98–118, 145–165, 208–228, and 238–258; these read WHID…FVFY, IAPL…MDLI, NITF…SIKI, LFGN…MPWW, and AIFH…LTIV.

This sequence belongs to the ATPase A chain family. As to quaternary structure, F-type ATPases have 2 components, CF(1) - the catalytic core - and CF(0) - the membrane proton channel. CF(1) has five subunits: alpha(3), beta(3), gamma(1), delta(1), epsilon(1). CF(0) has three main subunits: a(1), b(2) and c(9-12). The alpha and beta chains form an alternating ring which encloses part of the gamma chain. CF(1) is attached to CF(0) by a central stalk formed by the gamma and epsilon chains, while a peripheral stalk is formed by the delta and b chains.

It localises to the cell inner membrane. Functionally, key component of the proton channel; it plays a direct role in the translocation of protons across the membrane. This chain is ATP synthase subunit a, found in Psychromonas ingrahamii (strain DSM 17664 / CCUG 51855 / 37).